Consider the following 105-residue polypeptide: Delta-hexatoxin-Mg1a (105 aa).

The signal sequence occupies residues 1–18 (MKTLVIACVALVLVVVHG). A propeptide spanning residues 19–60 (EVIEEVNEKQLQESVEEKYSLLQRLEKLDEAITAEENRNSRV) is cleaved from the precursor. 4 cysteine pairs are disulfide-bonded: cysteine 63–cysteine 77, cysteine 70–cysteine 82, cysteine 76–cysteine 93, and cysteine 78–cysteine 105.

The protein belongs to the neurotoxin 06 (delta-actx) family. Expressed by the venom gland.

It is found in the secreted. Its function is as follows. Selectively slows channel inactivation of mammalian Nav1.1/SCN1A, Nav1.3/SCN3A, and Nav1.6/SCN8A and shows higher affinity for insect Nav1/para channels (site 3). Induces tonic repetitive firing of nerve impulses in insect neurons accompanied by plateau potentials. This Macrothele gigas (Japanese funnel web spider) protein is Delta-hexatoxin-Mg1a.